We begin with the raw amino-acid sequence, 66 residues long: ATP synthase protein 8 (66 aa).

The chain crosses the membrane as a helical span at residues 8 to 24 (PWPMVIMSMILTLFYIT). Lys54 bears the N6-acetyllysine; alternate mark. N6-succinyllysine; alternate is present on Lys54. Lys57 carries the N6-acetyllysine modification.

Belongs to the ATPase protein 8 family. F-type ATPases have 2 components, CF(1) - the catalytic core - and CF(0) - the membrane proton channel. Component of an ATP synthase complex composed of ATP5PB, ATP5MC1, ATP5F1E, ATP5PD, ATP5ME, ATP5PF, ATP5MF, MT-ATP6, MT-ATP8, ATP5F1A, ATP5F1B, ATP5F1D, ATP5F1C, ATP5PO, ATP5MG, ATP5MK and ATP5MJ. Interacts with PRICKLE3.

It is found in the mitochondrion membrane. In terms of biological role, mitochondrial membrane ATP synthase (F(1)F(0) ATP synthase or Complex V) produces ATP from ADP in the presence of a proton gradient across the membrane which is generated by electron transport complexes of the respiratory chain. F-type ATPases consist of two structural domains, F(1) - containing the extramembraneous catalytic core and F(0) - containing the membrane proton channel, linked together by a central stalk and a peripheral stalk. During catalysis, ATP synthesis in the catalytic domain of F(1) is coupled via a rotary mechanism of the central stalk subunits to proton translocation. Part of the complex F(0) domain. Minor subunit located with subunit a in the membrane. The sequence is that of ATP synthase protein 8 (MT-ATP8) from Alouatta guariba (Brown howler monkey).